The primary structure comprises 450 residues: Casein kinase 1-like protein 1 (450 aa).

The 270-residue stretch at 9–278 (FRLGRKIGSG…LKRIFRDLFI (270 aa)) folds into the Protein kinase domain. Residues 15-23 (IGSGSFGEI) and Lys38 contribute to the ATP site. Catalysis depends on Asp128, which acts as the Proton acceptor. The segment at 311 to 450 (AVGTSAALPP…LQVSDEHHPH (140 aa)) is disordered. Over residues 328–342 (YTGEEEGRPHMESSR) the composition is skewed to basic and acidic residues. A compositionally biased stretch (polar residues) spans 349-365 (LDNSGNISNQPTSSSAR). A compositionally biased stretch (low complexity) spans 371–382 (SSSLFAQSAGSS).

This sequence belongs to the protein kinase superfamily. CK1 Ser/Thr protein kinase family. Casein kinase I subfamily. In terms of assembly, monomer. In terms of processing, autophosphorylated. As to expression, expressed in flowers.

The protein localises to the cytoplasm. It localises to the cell junction. The protein resides in the plasmodesma. The catalysed reaction is L-seryl-[protein] + ATP = O-phospho-L-seryl-[protein] + ADP + H(+). It catalyses the reaction L-threonyl-[protein] + ATP = O-phospho-L-threonyl-[protein] + ADP + H(+). Its function is as follows. Casein kinases are operationally defined by their preferential utilization of acidic proteins such as caseins as substrates. It can phosphorylate a large number of proteins. This is Casein kinase 1-like protein 1 from Arabidopsis thaliana (Mouse-ear cress).